The following is an 858-amino-acid chain: Bifunctional uridylyltransferase/uridylyl-removing enzyme (858 aa).

The tract at residues 1 to 324 (MSAHAAPSPE…PATSGITRVL (324 aa)) is uridylyltransferase. Residues 325-681 (SADRFVEKQG…ARPSPIGDAL (357 aa)) form a uridylyl-removing region. Residues 443-565 (VDQHILMVLR…VGNERYLTAL (123 aa)) enclose the HD domain. ACT domains follow at residues 682–763 (QVLV…PSKG) and 790–858 (ILSV…AIAV).

It belongs to the GlnD family. It depends on Mg(2+) as a cofactor.

It catalyses the reaction [protein-PII]-L-tyrosine + UTP = [protein-PII]-uridylyl-L-tyrosine + diphosphate. The catalysed reaction is [protein-PII]-uridylyl-L-tyrosine + H2O = [protein-PII]-L-tyrosine + UMP + H(+). With respect to regulation, uridylyltransferase (UTase) activity is inhibited by glutamine, while glutamine activates uridylyl-removing (UR) activity. Its function is as follows. Modifies, by uridylylation and deuridylylation, the PII regulatory proteins (GlnB and homologs), in response to the nitrogen status of the cell that GlnD senses through the glutamine level. Under low glutamine levels, catalyzes the conversion of the PII proteins and UTP to PII-UMP and PPi, while under higher glutamine levels, GlnD hydrolyzes PII-UMP to PII and UMP (deuridylylation). Thus, controls uridylylation state and activity of the PII proteins, and plays an important role in the regulation of nitrogen assimilation and metabolism. In Burkholderia orbicola (strain AU 1054), this protein is Bifunctional uridylyltransferase/uridylyl-removing enzyme.